A 451-amino-acid polypeptide reads, in one-letter code: Nicotinamide phosphoribosyltransferase (451 aa).

A diphosphate-binding site is contributed by Arg209. Asp232 contributes to the beta-nicotinamide D-ribonucleotide binding site. Residues His248 and Arg309 each coordinate diphosphate. Beta-nicotinamide D-ribonucleotide contacts are provided by residues 309-311, 364-365, and Arg403; these read RPD and GD.

This sequence belongs to the NAPRTase family.

It catalyses the reaction beta-nicotinamide D-ribonucleotide + diphosphate = 5-phospho-alpha-D-ribose 1-diphosphate + nicotinamide + H(+). It functions in the pathway cofactor biosynthesis; NAD(+) biosynthesis; nicotinamide D-ribonucleotide from 5-phospho-alpha-D-ribose 1-diphosphate and nicotinamide: step 1/1. Catalyzes the condensation of nicotinamide with 5-phosphoribosyl-1-pyrophosphate to yield nicotinamide mononucleotide, an intermediate in the biosynthesis of NAD. In Mycoplasma pneumoniae (strain ATCC 29342 / M129 / Subtype 1) (Mycoplasmoides pneumoniae), this protein is Nicotinamide phosphoribosyltransferase.